The primary structure comprises 1635 residues: Cortactin-binding protein 2 (1635 aa).

4 disordered regions span residues 1–20 (MATA…ARTS), 193–219 (ASKL…KSSQ), 264–469 (EQLR…DNLV), and 483–582 (SRFT…PHGI). The stretch at 116-273 (RKMQERMSAQ…EQLRKGNDHK (158 aa)) forms a coiled coil. Composition is skewed to basic and acidic residues over residues 193 to 205 (ASKL…KTGE) and 264 to 274 (EQLRKGNDHKP). 2 stretches are compositionally biased toward low complexity: residues 320 to 331 (PPVAVPAKPSSA) and 375 to 395 (GPSS…LLNN). Polar residues predominate over residues 402 to 414 (SQNHSLTSSTPNL). Residues 439-453 (QGNANDQDQNGNTTQ) show a composition bias toward low complexity. Positions 454 to 466 (SPPSREVSPTSRD) are enriched in polar residues. At arginine 484 the chain carries Asymmetric dimethylarginine. ANK repeat units follow at residues 697–727 (GRPT…DINH), 731–760 (DGSS…QVDD), 764–793 (NGFT…DINH), 797–826 (GGQT…DRSI), 830–859 (DGWT…PESE), and 893–923 (EGWT…EAER). Residues 856–876 (PESENSGSKDQTGLGSREESR) are disordered. Over residues 858–869 (SENSGSKDQTGL) the composition is skewed to polar residues. The disordered stretch occupies residues 1420–1469 (SHRKKGESGSWRKVNTSPRKKSGLSSSQTWTKQEATKDGVRNDTGHQNGN). The span at 1432-1452 (KVNTSPRKKSGLSSSQTWTKQ) shows a compositional bias: polar residues. Basic and acidic residues predominate over residues 1453–1463 (EATKDGVRNDT). Phosphoserine is present on serine 1498. Positions 1531–1624 (RMFGSSRTDP…RQREINNNLK (94 aa)) are disordered. Polar residues-rich tracts occupy residues 1546–1555 (PTMSDRSLPS) and 1563–1577 (LSSN…NTPK). Positions 1615-1624 (RQREINNNLK) are enriched in basic and acidic residues.

As to quaternary structure, interacts with CTTN/cortactin SH3 domain. Interacts with STRN, STRN4/zinedin and MOB4/phocein; this interactions mediate the association with the STRIPAK core complex and may regulate dendritic spine distribution of the STRIPAK complex in hippocampal neurons. Activation of glutamate receptors weakens the interaction with STRN and STRN4.

The protein localises to the cytoplasm. The protein resides in the cell cortex. It is found in the cell projection. It localises to the dendritic spine. Its function is as follows. Regulates the dendritic spine distribution of CTTN/cortactin in hippocampal neurons, and thus controls dendritic spinogenesis and dendritic spine maintenance. Associates with the striatin-interacting phosphatase and kinase (STRIPAK) core complex to regulate dendritic spine distribution of the STRIPAK complex in hippocampal neurons. The sequence is that of Cortactin-binding protein 2 (CTTNBP2) from Ornithorhynchus anatinus (Duckbill platypus).